Here is a 100-residue protein sequence, read N- to C-terminus: Enhancer of rudimentary homolog (100 aa).

Belongs to the E(R) family. Homodimer.

Functionally, may have a role in the cell cycle. This chain is Enhancer of rudimentary homolog (erh), found in Dictyostelium discoideum (Social amoeba).